The following is a 623-amino-acid chain: Peptide transporter PTR2 (623 aa).

2 disordered regions span residues 1-20 (MVSS…VLTD) and 31-58 (DYED…TPQE). Helical transmembrane passes span 134 to 154 (ALTN…GYLG), 163 to 183 (AIQW…FASI), 191 to 211 (NAGL…SGLM), 250 to 270 (ITNV…ATSY), 277 to 297 (FWLA…FLFI), 385 to 405 (IIFN…IGAM), 418 to 438 (FNPL…YPLL), 448 to 468 (IWRI…GFVL), 499 to 519 (LFIL…ELAY), 529 to 549 (LVYA…LAIT), and 557 to 577 (LHWV…VMLA).

The protein belongs to the major facilitator superfamily. Proton-dependent oligopeptide transporter (POT/PTR) (TC 2.A.17) family.

The protein resides in the membrane. Uptake of small peptides. This Candida albicans (Yeast) protein is Peptide transporter PTR2 (PTR2).